Here is a 491-residue protein sequence, read N- to C-terminus: 2,3-bisphosphoglycerate-independent phosphoglycerate mutase (491 aa).

Mn(2+) is bound by residues D11 and S61. S61 serves as the catalytic Phosphoserine intermediate. Residues H118, 147–148 (RD), R177, R183, 247–250 (RNDR), and K320 contribute to the substrate site. Mn(2+) is bound by residues D386, H390, D427, H428, and H445.

It belongs to the BPG-independent phosphoglycerate mutase family. In terms of assembly, monomer. It depends on Mn(2+) as a cofactor.

The enzyme catalyses (2R)-2-phosphoglycerate = (2R)-3-phosphoglycerate. Its pathway is carbohydrate degradation; glycolysis; pyruvate from D-glyceraldehyde 3-phosphate: step 3/5. Its function is as follows. Catalyzes the interconversion of 2-phosphoglycerate and 3-phosphoglycerate. This Helicobacter pylori (strain ATCC 700392 / 26695) (Campylobacter pylori) protein is 2,3-bisphosphoglycerate-independent phosphoglycerate mutase.